The following is a 405-amino-acid chain: Probable tRNA sulfurtransferase (405 aa).

The THUMP domain occupies 60 to 165 (EPVNDRLKVV…QDGAYISNQL (106 aa)). Residues 183-184 (ML), 208-209 (HF), Arg-265, Gly-287, and Gln-296 each bind ATP.

This sequence belongs to the ThiI family.

It is found in the cytoplasm. It catalyses the reaction [ThiI sulfur-carrier protein]-S-sulfanyl-L-cysteine + a uridine in tRNA + 2 reduced [2Fe-2S]-[ferredoxin] + ATP + H(+) = [ThiI sulfur-carrier protein]-L-cysteine + a 4-thiouridine in tRNA + 2 oxidized [2Fe-2S]-[ferredoxin] + AMP + diphosphate. It carries out the reaction [ThiS sulfur-carrier protein]-C-terminal Gly-Gly-AMP + S-sulfanyl-L-cysteinyl-[cysteine desulfurase] + AH2 = [ThiS sulfur-carrier protein]-C-terminal-Gly-aminoethanethioate + L-cysteinyl-[cysteine desulfurase] + A + AMP + 2 H(+). It participates in cofactor biosynthesis; thiamine diphosphate biosynthesis. Functionally, catalyzes the ATP-dependent transfer of a sulfur to tRNA to produce 4-thiouridine in position 8 of tRNAs, which functions as a near-UV photosensor. Also catalyzes the transfer of sulfur to the sulfur carrier protein ThiS, forming ThiS-thiocarboxylate. This is a step in the synthesis of thiazole, in the thiamine biosynthesis pathway. The sulfur is donated as persulfide by IscS. The chain is Probable tRNA sulfurtransferase from Lactobacillus delbrueckii subsp. bulgaricus (strain ATCC BAA-365 / Lb-18).